The sequence spans 121 residues: MVAQLYHHLTILIASIYIIFFVNAAPTLYEDDEEDFNSTEYDVFLDSDSFQFPRRNSSCNCTREEATRTLLEALKRALQIIAGYINETDTEELPTYPPTMTTPLETTPLDTSPPVLPSAIP.

A helical transmembrane segment spans residues 9–29 (LTILIASIYIIFFVNAAPTLY). The tract at residues 91–121 (EELPTYPPTMTTPLETTPLDTSPPVLPSAIP) is disordered. Positions 98-113 (PTMTTPLETTPLDTSP) are enriched in low complexity.

It is found in the host membrane. This is an uncharacterized protein from Alcelaphine herpesvirus 1 (strain C500) (AlHV-1).